Here is a 352-residue protein sequence, read N- to C-terminus: GTPase Obg (352 aa).

Residues 1–159 (MSFIDEAKVF…FPIFMQLKVL (159 aa)) enclose the Obg domain. The OBG-type G domain maps to 160 to 327 (SDIGIIGMPN…VMLYEMLQKD (168 aa)). GTP-binding positions include 166-173 (GMPNAGKS), 191-195 (FTTLE), 212-215 (DIPG), 279-282 (NKCD), and 308-310 (SLD). Residues Ser173 and Thr193 each contribute to the Mg(2+) site.

The protein belongs to the TRAFAC class OBG-HflX-like GTPase superfamily. OBG GTPase family. As to quaternary structure, monomer. Requires Mg(2+) as cofactor.

It localises to the cytoplasm. Its function is as follows. An essential GTPase which binds GTP, GDP and possibly (p)ppGpp with moderate affinity, with high nucleotide exchange rates and a fairly low GTP hydrolysis rate. Plays a role in control of the cell cycle, stress response, ribosome biogenesis and in those bacteria that undergo differentiation, in morphogenesis control. The chain is GTPase Obg from Anaplasma phagocytophilum (strain HZ).